The following is a 321-amino-acid chain: Outer envelope protein 36, chloroplastic (321 aa).

The protein belongs to the OEP80 (TC 1.B.33.2) family. Expressed in germinating seeds.

Its subcellular location is the plastid. It is found in the chloroplast outer membrane. Its function is as follows. May play a role during plastid development. The sequence is that of Outer envelope protein 36, chloroplastic from Arabidopsis thaliana (Mouse-ear cress).